The primary structure comprises 120 residues: uncharacterized protein (120 aa).

A run of 4 helical transmembrane segments spans residues 9–29 (WPDF…LFCG), 32–52 (ALMF…ADCL), 68–88 (FVWP…VMAT), and 94–114 (GPEH…SFRF).

The protein resides in the membrane. This is an uncharacterized protein from Escherichia phage Mu (Bacteriophage Mu).